A 205-amino-acid polypeptide reads, in one-letter code: Holliday junction resolvase RecU (205 aa).

The segment at 1–26 is disordered; that stretch reads MIRYPNGKSYQPIQPIGTKKRISGES. Threonine 86, aspartate 88, glutamate 101, and glutamine 120 together coordinate Mg(2+).

It belongs to the RecU family. It depends on Mg(2+) as a cofactor.

The protein localises to the cytoplasm. The enzyme catalyses Endonucleolytic cleavage at a junction such as a reciprocal single-stranded crossover between two homologous DNA duplexes (Holliday junction).. In terms of biological role, endonuclease that resolves Holliday junction intermediates in genetic recombination. Cleaves mobile four-strand junctions by introducing symmetrical nicks in paired strands. Promotes annealing of linear ssDNA with homologous dsDNA. Required for DNA repair, homologous recombination and chromosome segregation. This chain is Holliday junction resolvase RecU, found in Bacillus pumilus (strain SAFR-032).